We begin with the raw amino-acid sequence, 114 residues long: SNF1-related protein kinase regulatory subunit beta-3 (114 aa).

The disordered stretch occupies residues 26 to 50 (SYNNVYSSTEDETRDPPAVPPHLQH). The segment at 40–114 (DPPAVPPHLQ…PVQRRGSANV (75 aa)) is association with SNF1 complex (ASC).

The protein belongs to the 5'-AMP-activated protein kinase beta subunit family. Subunit of a probable heterotrimeric complex consisting of an alpha catalytic (KIN10 or KIN11) subunit, and a beta (KINB) and a gamma (KING or SNF4) non-catalytic regulatory subunits. Interacts with KIN10, KIN11 and SNF4. Interacts with FLZ1, FLZ2, FLZ3, FLZ4, FLZ5, FLZ7, FLZ8, FLZ10, FLZ13, FLZ14, FLZ15 and FLZ16. Expressed in rosette (at the protein level). Expressed in the whole plant and at the different developmental stage with a higher level in stems.

Its function is as follows. Regulatory subunit of the probable trimeric SNF1-related protein kinase (SnRK) complex, which may play a role in a signal transduction cascade regulating gene expression and carbohydrate metabolism in higher plants. The chain is SNF1-related protein kinase regulatory subunit beta-3 (KINB3) from Arabidopsis thaliana (Mouse-ear cress).